The sequence spans 378 residues: Glutamate 5-kinase (378 aa).

Residue Lys-17 coordinates ATP. Substrate is bound by residues Ser-58, Asp-145, and Asn-157. Residues 177–178 (TD) and 221–227 (TGGMMTK) each bind ATP. The PUA domain occupies 286–364 (VGKLYLDSGA…KEIPTILGYV (79 aa)).

This sequence belongs to the glutamate 5-kinase family.

The protein resides in the cytoplasm. It carries out the reaction L-glutamate + ATP = L-glutamyl 5-phosphate + ADP. It participates in amino-acid biosynthesis; L-proline biosynthesis; L-glutamate 5-semialdehyde from L-glutamate: step 1/2. Functionally, catalyzes the transfer of a phosphate group to glutamate to form L-glutamate 5-phosphate. This chain is Glutamate 5-kinase, found in Nostoc sp. (strain PCC 7120 / SAG 25.82 / UTEX 2576).